We begin with the raw amino-acid sequence, 291 residues long: 4-hydroxy-tetrahydrodipicolinate synthase (291 aa).

Thr-45 provides a ligand contact to pyruvate. Catalysis depends on Tyr-133, which acts as the Proton donor/acceptor. Lys-161 functions as the Schiff-base intermediate with substrate in the catalytic mechanism. Ile-203 serves as a coordination point for pyruvate.

The protein belongs to the DapA family. Homotetramer; dimer of dimers.

It is found in the cytoplasm. It catalyses the reaction L-aspartate 4-semialdehyde + pyruvate = (2S,4S)-4-hydroxy-2,3,4,5-tetrahydrodipicolinate + H2O + H(+). It participates in amino-acid biosynthesis; L-lysine biosynthesis via DAP pathway; (S)-tetrahydrodipicolinate from L-aspartate: step 3/4. In terms of biological role, catalyzes the condensation of (S)-aspartate-beta-semialdehyde [(S)-ASA] and pyruvate to 4-hydroxy-tetrahydrodipicolinate (HTPA). This Teredinibacter turnerae (strain ATCC 39867 / T7901) protein is 4-hydroxy-tetrahydrodipicolinate synthase.